A 333-amino-acid chain; its full sequence is L-asparagine oxygenase (333 aa).

2 residues coordinate L-asparagine: Glu-125 and Asn-146. 2 residues coordinate Fe cation: His-155 and Glu-157. The L-asparagine site is built by Glu-157 and Asn-158. His-287 is a binding site for Fe cation. Arg-301 contributes to the 2-oxoglutarate binding site. Residue Arg-305 coordinates L-asparagine.

The protein belongs to the clavaminate synthase family. Fe(2+) serves as cofactor.

It carries out the reaction L-asparagine + 2-oxoglutarate + O2 = (2S,3S)-3-hydroxyasparagine + succinate + CO2. The protein operates within antibiotic biosynthesis; calcium-dependent antibiotic biosynthesis. Its function is as follows. Catalyzes the 3-hydroxylation of L-asparagine to (2S,3S)-3-hydroxyasparagine. The 3-hydroxylated asparagine produced is incorporated at position 9 during the biosynthesis of the non-ribosomally synthesized calcium-dependent antibiotic (CDA), a 11-residue acidic lipopeptide lactone. Is able to hydroxylate only free L-asparagine, since it hydroxylates neither a CDA analog with unmodified Asn at position 9 nor a peptidyl-carrier-protein (PCP)-bound asparagine. Is not active toward D-asparagine. The chain is L-asparagine oxygenase (asnO) from Streptomyces coelicolor (strain ATCC BAA-471 / A3(2) / M145).